Consider the following 686-residue polypeptide: Methionine--tRNA ligase (686 aa).

The 'HIGH' region motif lies at proline 13–histidine 23. Residues cysteine 144, cysteine 147, cysteine 157, and cysteine 160 each coordinate Zn(2+). The 'KMSKS' region signature appears at lysine 335–serine 339. ATP is bound at residue lysine 338. Residues aspartate 580–glycine 686 enclose the tRNA-binding domain.

It belongs to the class-I aminoacyl-tRNA synthetase family. MetG type 1 subfamily. As to quaternary structure, homodimer. It depends on Zn(2+) as a cofactor.

It localises to the cytoplasm. It catalyses the reaction tRNA(Met) + L-methionine + ATP = L-methionyl-tRNA(Met) + AMP + diphosphate. In terms of biological role, is required not only for elongation of protein synthesis but also for the initiation of all mRNA translation through initiator tRNA(fMet) aminoacylation. The protein is Methionine--tRNA ligase of Cupriavidus necator (strain ATCC 17699 / DSM 428 / KCTC 22496 / NCIMB 10442 / H16 / Stanier 337) (Ralstonia eutropha).